Here is a 255-residue protein sequence, read N- to C-terminus: tRNA pseudouridine synthase A (255 aa).

Catalysis depends on Asp56, which acts as the Nucleophile. Tyr114 contributes to the substrate binding site.

This sequence belongs to the tRNA pseudouridine synthase TruA family. In terms of assembly, homodimer.

The enzyme catalyses uridine(38/39/40) in tRNA = pseudouridine(38/39/40) in tRNA. Formation of pseudouridine at positions 38, 39 and 40 in the anticodon stem and loop of transfer RNAs. The sequence is that of tRNA pseudouridine synthase A from Methylacidiphilum infernorum (isolate V4) (Methylokorus infernorum (strain V4)).